The sequence spans 343 residues: Mitochondrial distribution and morphology protein 34 (343 aa).

The SMP-LTD domain maps to 1–196 (MSFVFPSWST…LPGIIHRLSQ (196 aa)). Disordered regions lie at residues 227–255 (EVEE…IGPG) and 300–325 (GAGT…KAKR). The span at 306–317 (SGRASLASSSVG) shows a compositional bias: low complexity.

The protein belongs to the MDM34 family. As to quaternary structure, component of the ER-mitochondria encounter structure (ERMES) or MDM complex, composed of MMM1, MDM10, MDM12 and MDM34.

It is found in the mitochondrion outer membrane. In terms of biological role, component of the ERMES/MDM complex, which serves as a molecular tether to connect the endoplasmic reticulum (ER) and mitochondria. Components of this complex are involved in the control of mitochondrial shape and protein biogenesis, and function in nonvesicular lipid trafficking between the ER and mitochondria. MDM34 is required for the interaction of the ER-resident membrane protein MMM1 and the outer mitochondrial membrane-resident beta-barrel protein MDM10. The protein is Mitochondrial distribution and morphology protein 34 of Cryptococcus neoformans var. neoformans serotype D (strain B-3501A) (Filobasidiella neoformans).